Here is a 95-residue protein sequence, read N- to C-terminus: Putative defensin-like protein 252 (95 aa).

The N-terminal stretch at 1-27 is a signal peptide; it reads MRCVTSFVVLCILMFLVVNNVKVDVKA. 4 disulfide bridges follow: Cys34/Cys93, Cys45/Cys72, Cys56/Cys85, and Cys70/Cys87.

This sequence belongs to the DEFL family.

It localises to the secreted. The polypeptide is Putative defensin-like protein 252 (SCRL13) (Arabidopsis thaliana (Mouse-ear cress)).